Reading from the N-terminus, the 393-residue chain is Tryptophan synthase beta chain (393 aa).

At K86 the chain carries N6-(pyridoxal phosphate)lysine.

This sequence belongs to the TrpB family. In terms of assembly, tetramer of two alpha and two beta chains. It depends on pyridoxal 5'-phosphate as a cofactor.

The catalysed reaction is (1S,2R)-1-C-(indol-3-yl)glycerol 3-phosphate + L-serine = D-glyceraldehyde 3-phosphate + L-tryptophan + H2O. The protein operates within amino-acid biosynthesis; L-tryptophan biosynthesis; L-tryptophan from chorismate: step 5/5. The beta subunit is responsible for the synthesis of L-tryptophan from indole and L-serine. In Alteromonas mediterranea (strain DSM 17117 / CIP 110805 / LMG 28347 / Deep ecotype), this protein is Tryptophan synthase beta chain.